Consider the following 933-residue polypeptide: Melanoma-associated antigen E1 (933 aa).

4 disordered regions span residues 1 to 113 (MSLV…VSAG), 149 to 236 (GASI…GINL), 256 to 282 (SDIS…VQST), and 360 to 393 (TSGL…EDEN). A compositionally biased stretch (basic residues) spans 8–23 (SRRRRGGRANGRKNSG). Composition is skewed to polar residues over residues 64-97 (GGSS…QLPT), 149-166 (GASI…NVQP), 173-184 (GTSVPPTFSEES), and 219-236 (APST…GINL). 2 consecutive MAGE domains span residues 467–666 (MEQN…YNEA) and 721–912 (LESK…YREA). The interaction with DTNA stretch occupies residues 719-933 (SRLESKSRKL…RRPLVVRNLR (215 aa)).

In terms of assembly, interacts with DTNA. Interacts with TRIM28.

The protein localises to the cytoplasm. It localises to the perinuclear region. It is found in the nucleus. Its subcellular location is the cell membrane. May enhance ubiquitin ligase activity of RING-type zinc finger-containing E3 ubiquitin-protein ligases. Proposed to act through recruitment and/or stabilization of the Ubl-conjugating enzyme (E2) at the E3:substrate complex. The sequence is that of Melanoma-associated antigen E1 (Magee1) from Rattus norvegicus (Rat).